The following is a 496-amino-acid chain: UDP-glycosyltransferase 73C2 (496 aa).

UDP-alpha-D-glucose-binding positions include S297, 357-359, 374-382, and 396-399; these read SPQ, HCGWNSTLE, and FGDQ.

Belongs to the UDP-glycosyltransferase family.

The chain is UDP-glycosyltransferase 73C2 (UGT73C2) from Arabidopsis thaliana (Mouse-ear cress).